Here is a 254-residue protein sequence, read N- to C-terminus: Ribonuclease 3 (254 aa).

The 131-residue stretch at 24 to 154 folds into the RNase III domain; the sequence is LRRLQETLGV…VIGALFLDSG (131 aa). Glu-67 contacts Mg(2+). The active site involves Asp-71. 2 residues coordinate Mg(2+): Asp-140 and Glu-143. Residue Glu-143 is part of the active site. The region spanning 181–250 is the DRBM domain; that stretch reads DYKSTLQVLA…ARLAWEQLSG (70 aa).

It belongs to the ribonuclease III family. Homodimer. Mg(2+) serves as cofactor.

It is found in the cytoplasm. It catalyses the reaction Endonucleolytic cleavage to 5'-phosphomonoester.. Its function is as follows. Digests double-stranded RNA. Involved in the processing of primary rRNA transcript to yield the immediate precursors to the large and small rRNAs (23S and 16S). Processes some mRNAs, and tRNAs when they are encoded in the rRNA operon. Processes pre-crRNA and tracrRNA of type II CRISPR loci if present in the organism. This is Ribonuclease 3 from Treponema pallidum (strain Nichols).